A 347-amino-acid polypeptide reads, in one-letter code: Galactoside alpha-(1,2)-fucosyltransferase 2 (347 aa).

The Cytoplasmic segment spans residues 1 to 5; that stretch reads MASAQ. A helical; Signal-anchor for type II membrane protein membrane pass occupies residues 6–26; sequence VPFSFPLAHFLIFVFVTSTII. The Lumenal segment spans residues 27–347; the sequence is HLQQRIVKLQ…PADLSPLLKH (321 aa). N-linked (GlcNAc...) asparagine glycans are attached at residues Asn192, Asn258, Asn286, and Asn312.

Belongs to the glycosyltransferase 11 family. In terms of tissue distribution, expressed in stomach, colon, ovary and uterus, specifically in luminal uterine epithelium. Expressed in various tissues including heart, liver, kidney, testis, epididymis, small intestine,and cecum. Expressed in duodenum, jejunum and ileum.

It is found in the golgi apparatus. Its subcellular location is the golgi stack membrane. It catalyses the reaction a beta-D-galactosyl-(1-&gt;3)-N-acetyl-beta-D-glucosaminyl derivative + GDP-beta-L-fucose = an alpha-L-Fuc-(1-&gt;2)-beta-D-Gal-(1-&gt;3)-beta-D-GlcNAc derivative + GDP + H(+). The catalysed reaction is a beta-D-galactosyl-(1-&gt;4)-N-acetyl-beta-D-glucosaminyl derivative + GDP-beta-L-fucose = an alpha-L-Fuc-(1-&gt;2)-beta-D-Gal-(1-&gt;4)-beta-D-GlcNAc derivative + GDP + H(+). It carries out the reaction a neolactoside nLc4Cer + GDP-beta-L-fucose = a neolactoside IV(2)-alpha-Fuc-nLc4Cer + GDP + H(+). The enzyme catalyses a neolactoside nLc4Cer(d18:1(4E)) + GDP-beta-L-fucose = a neolactoside IV(2)-alpha-Fuc-nLc4Cer(d18:1(4E)) + GDP + H(+). It catalyses the reaction a ganglioside GM1 + GDP-beta-L-fucose = a ganglioside Fuc-GM1 + GDP + H(+). The catalysed reaction is a ganglioside GA1 + GDP-beta-L-fucose = a ganglioside Fuc-GA1 + GDP + H(+). It carries out the reaction Lc4Cer + GDP-beta-L-fucose = alpha-L-fucosyl-(1-&gt;2)-beta-D-galactosyl-(1-&gt;3)-N-acetyl-beta-D-glucosaminyl-(1-&gt;3)-beta-D-galactosyl-(1-&gt;4)-beta-D-glucosyl-(1&lt;-&gt;1')-ceramide + GDP + H(+). The enzyme catalyses a beta-D-Gal-(1-&gt;3)-beta-D-GlcNAc-(1-&gt;3)-beta-D-Gal-(1-&gt;4)-beta-D-Glc-(1&lt;-&gt;1')-Cer(d18:1(4E)) + GDP-beta-L-fucose = alpha-L-fucosyl-(1-&gt;2)- beta-D-galactosyl-(1-&gt;3)-N-acetyl-beta-D-glucosaminyl-(1-&gt;3)-beta-D-galactosyl-(1-&gt;4)-beta-D-glucosyl-(1&lt;-&gt;1')-N-acylsphing-4-enine + GDP + H(+). It catalyses the reaction a ganglioside GD1b + GDP-beta-L-fucose = a ganglioside Fuc-GD1b + GDP + H(+). The catalysed reaction is a ganglioside GM1 (d18:1(4E)) + GDP-beta-L-fucose = a ganglioside Fuc-GM1 (d18:1(4E)) + GDP + H(+). It carries out the reaction a globoside GalGb4Cer (d18:1(4E)) + GDP-beta-L-fucose = a globoside Globo-H (d18:1(4E)) + GDP + H(+). The enzyme catalyses a lactoside III(4)-a-Fuc-Lc4Cer + GDP-beta-L-fucose = a lactoside IV(2),III(4)-a-[Fuc]2-Lc4Cer + GDP + H(+). It catalyses the reaction beta-D-galactosyl-(1-&gt;3)-N-acetyl-D-galactosamine + GDP-beta-L-fucose = alpha-L-fucosyl-(1-&gt;2)-beta-D-galactosyl-(1-&gt;3)-N-acetyl-D-galactosamine + GDP + H(+). It functions in the pathway protein modification; protein glycosylation. In terms of biological role, catalyzes the transfer of L-fucose, from a guanosine diphosphate-beta-L-fucose, to the terminal galactose on both O- and N-linked glycans chains of cell surface glycoproteins and glycolipids and the resulting epitope regulates several processes such as cell-cell interaction including host-microbe interaction, cell surface expression and cell proliferation. Preferentially fucosylates gangliosides GA1 and GM1 in the antrum, cecum and colon and in the female reproductive organs. Fucosylated host glycoproteins or glycolipids mediate interaction with intestinal microbiota influencing its composition. Creates a soluble precursor oligosaccharide FuC-alpha ((1,2)Galbeta-) called the H antigen which is an essential substrate for the final step in the soluble ABO blood group antigen synthesis pathway. This is Galactoside alpha-(1,2)-fucosyltransferase 2 from Mus musculus (Mouse).